We begin with the raw amino-acid sequence, 134 residues long: Methylglyoxal synthase (134 aa).

The region spanning 1 to 134 (MHIALIAHDE…DWRDLRRNDE (134 aa)) is the MGS-like domain. Substrate contacts are provided by residues H8, K12, 34-37 (TGTT), and 54-55 (SG). D60 (proton donor/acceptor) is an active-site residue. Position 87 (H87) interacts with substrate.

The protein belongs to the methylglyoxal synthase family.

The enzyme catalyses dihydroxyacetone phosphate = methylglyoxal + phosphate. Functionally, catalyzes the formation of methylglyoxal from dihydroxyacetone phosphate. The chain is Methylglyoxal synthase from Listeria welshimeri serovar 6b (strain ATCC 35897 / DSM 20650 / CCUG 15529 / CIP 8149 / NCTC 11857 / SLCC 5334 / V8).